We begin with the raw amino-acid sequence, 219 residues long: Guanylate kinase (219 aa).

Residues 15–194 enclose the Guanylate kinase-like domain; that stretch reads GLMFVLSSPS…AFAEVQSILK (180 aa). 22–29 is an ATP binding site; that stretch reads SPSGAGKT.

Belongs to the guanylate kinase family.

It localises to the cytoplasm. The enzyme catalyses GMP + ATP = GDP + ADP. Functionally, essential for recycling GMP and indirectly, cGMP. The protein is Guanylate kinase of Bradyrhizobium diazoefficiens (strain JCM 10833 / BCRC 13528 / IAM 13628 / NBRC 14792 / USDA 110).